The chain runs to 204 residues: Ribonuclease HII (204 aa).

Positions 17-204 (QLVAGVDEVG…KPVQQLLQGD (188 aa)) constitute an RNase H type-2 domain. Asp-23, Glu-24, and Asp-115 together coordinate a divalent metal cation.

This sequence belongs to the RNase HII family. Requires Mn(2+) as cofactor. The cofactor is Mg(2+).

It localises to the cytoplasm. The enzyme catalyses Endonucleolytic cleavage to 5'-phosphomonoester.. Endonuclease that specifically degrades the RNA of RNA-DNA hybrids. This chain is Ribonuclease HII, found in Hahella chejuensis (strain KCTC 2396).